We begin with the raw amino-acid sequence, 547 residues long: MARYVFITGGVVSSLGKGLASAALGALLQARGFSVRLRKLDPYLNVDPGTMSPFEHGEVFVTDDGAETDLDLGHYERFTGVSARKTDSVSSGRIYSNVLEKERRGDYLGKTIQVIPHVTNEIKDFLRVGEDEVDFMLCEIGGTVGDIEGLPFFEAIRQFAQDKPRGQCIFVHLTLLPYVSASGELKTKPTQHSVKELRSIGIAPDVLLLRSERAIPEKEREKIALFCNVRKEAVIAAYDLKTIYEAPLAYHREGLDQAVLDAFGISPAPKPNLDRWVDVMDRLENAEGEVRVAIVGKYTQLEDAYKSIAEALTHGGMANRTRVRAEWINAELFEREDPSPFLEGFHAILVPGGFGERGTEGKIRAAQYAREKAIPYLGICLGMQMAVIEAARNLAQVKDAGSEEFDHEVGKKRFTPVVYHLKEWIQGNHIVERKHDDDKGGTMRLGAYTAALTPGSRVSEIYHATEIEERHRHRYEVDVRYREALEGCGLTFSGMSPDGRLPEIVEIKDHPWFIGVQFHPELKSKPFAPHPLFADFVRAAVEVSRLV.

The interval 1 to 265 (MARYVFITGG…DQAVLDAFGI (265 aa)) is amidoligase domain. Ser-13 is a CTP binding site. Ser-13 contributes to the UTP binding site. Residues 14–19 (SLGKGL) and Asp-71 contribute to the ATP site. Positions 71 and 139 each coordinate Mg(2+). Residues 146–148 (DIE), 186–191 (KTKPTQ), and Lys-222 each bind CTP. Residues 186–191 (KTKPTQ) and Lys-222 each bind UTP. The Glutamine amidotransferase type-1 domain occupies 291–546 (RVAIVGKYTQ…VRAAVEVSRL (256 aa)). L-glutamine is bound at residue Gly-353. Cys-380 serves as the catalytic Nucleophile; for glutamine hydrolysis. L-glutamine-binding positions include 381-384 (LGMQ), Glu-404, and Arg-474. Residues His-519 and Glu-521 contribute to the active site.

The protein belongs to the CTP synthase family. In terms of assembly, homotetramer.

The enzyme catalyses UTP + L-glutamine + ATP + H2O = CTP + L-glutamate + ADP + phosphate + 2 H(+). The catalysed reaction is L-glutamine + H2O = L-glutamate + NH4(+). It catalyses the reaction UTP + NH4(+) + ATP = CTP + ADP + phosphate + 2 H(+). Its pathway is pyrimidine metabolism; CTP biosynthesis via de novo pathway; CTP from UDP: step 2/2. Allosterically activated by GTP, when glutamine is the substrate; GTP has no effect on the reaction when ammonia is the substrate. The allosteric effector GTP functions by stabilizing the protein conformation that binds the tetrahedral intermediate(s) formed during glutamine hydrolysis. Inhibited by the product CTP, via allosteric rather than competitive inhibition. Functionally, catalyzes the ATP-dependent amination of UTP to CTP with either L-glutamine or ammonia as the source of nitrogen. Regulates intracellular CTP levels through interactions with the four ribonucleotide triphosphates. The sequence is that of CTP synthase from Cereibacter sphaeroides (strain ATCC 17023 / DSM 158 / JCM 6121 / CCUG 31486 / LMG 2827 / NBRC 12203 / NCIMB 8253 / ATH 2.4.1.) (Rhodobacter sphaeroides).